The following is a 149-amino-acid chain: Transcriptional repressor NrdR (149 aa).

A zinc finger lies at 3–34 (CPFCGNRDTNVRDSRSVNEGTFIKRRRFCGEC). The ATP-cone domain occupies 49–139 (IKVIKKNGSC…VYMNFENEKD (91 aa)).

Belongs to the NrdR family. It depends on Zn(2+) as a cofactor.

Its function is as follows. Negatively regulates transcription of bacterial ribonucleotide reductase nrd genes and operons by binding to NrdR-boxes. In Neorickettsia sennetsu (strain ATCC VR-367 / Miyayama) (Ehrlichia sennetsu), this protein is Transcriptional repressor NrdR.